A 518-amino-acid polypeptide reads, in one-letter code: Retinal dehydrogenase 2 (518 aa).

Tyr168 is subject to Phosphotyrosine. Residues 184–186 (IPW), 210–213 (KPAE), and 264–266 (STE) each bind NAD(+). The Proton acceptor role is filled by Glu286. Cys320 (nucleophile) is an active-site residue. Ser351 carries the post-translational modification Phosphoserine. NAD(+) contacts are provided by residues 366–370 (KQYNK) and Glu417.

This sequence belongs to the aldehyde dehydrogenase family. In terms of assembly, homotetramer. Found in testis and less abundantly in lung, brain, heart, liver and kidney.

Its subcellular location is the cytoplasm. The catalysed reaction is retinal + NAD(+) + H2O = retinoate + NADH + 2 H(+). It catalyses the reaction all-trans-retinal + NAD(+) + H2O = all-trans-retinoate + NADH + 2 H(+). It carries out the reaction all-trans-13,14-dihydroretinal + NAD(+) + H2O = all-trans-13,14-dihydroretinoate + NADH + 2 H(+). It functions in the pathway cofactor metabolism; retinol metabolism. Catalyzes the NAD-dependent oxidation of aldehyde substrates, such as all-trans-retinal and all-trans-13,14-dihydroretinal, to their corresponding carboxylic acids, all-trans-retinoate and all-trans-13,14-dihydroretinoate, respectively. Retinoate signaling is critical for the transcriptional control of many genes, for instance it is crucial for initiation of meiosis in both male and female. Recognizes retinal as substrate, both in its free form and when bound to cellular retinol-binding protein. Lacks activity with benzaldehyde, acetaldehyde and octanal. Displays complete lack of activity with citral. The protein is Retinal dehydrogenase 2 (Aldh1a2) of Rattus norvegicus (Rat).